The sequence spans 573 residues: Anti-Muellerian hormone type-2 receptor (573 aa).

An N-terminal signal peptide occupies residues 1-17; it reads MLGSLGLWALLPTAVEA. Topologically, residues 18-149 are extracellular; the sequence is PPNRRTCVFF…APGESIWMAL (132 aa). 2 disulfides stabilise this stretch: C55–C79 and C92–C109. An N-linked (GlcNAc...) asparagine glycan is attached at N66. N119 is a glycosylation site (N-linked (GlcNAc...) asparagine). Residues 150 to 170 form a helical membrane-spanning segment; sequence VLLGLFLLLLLLLGSIILALL. Residues 171 to 573 lie on the Cytoplasmic side of the membrane; the sequence is QRKNYRVRGE…PQPACTLSPV (403 aa). The 316-residue stretch at 203 to 518 folds into the Protein kinase domain; it reads LCFSQVIREG…AHPQESHPFP (316 aa). ATP-binding positions include 209–217 and K230; that span reads IREGGHAVV. D333 acts as the Proton acceptor in catalysis.

It belongs to the protein kinase superfamily. TKL Ser/Thr protein kinase family. TGFB receptor subfamily. Interacts with type I receptor ACVR1. Mg(2+) is required as a cofactor. It depends on Mn(2+) as a cofactor.

The protein resides in the membrane. It catalyses the reaction L-threonyl-[receptor-protein] + ATP = O-phospho-L-threonyl-[receptor-protein] + ADP + H(+). The enzyme catalyses L-seryl-[receptor-protein] + ATP = O-phospho-L-seryl-[receptor-protein] + ADP + H(+). Its function is as follows. On ligand binding, forms a receptor complex consisting of two type II and two type I transmembrane serine/threonine kinases. Type II receptors phosphorylate and activate type I receptors which autophosphorylate, then bind and activate SMAD transcriptional regulators. Receptor for anti-Muellerian hormone. The polypeptide is Anti-Muellerian hormone type-2 receptor (AMHR2) (Homo sapiens (Human)).